The primary structure comprises 218 residues: Dual specificity protein phosphatase TpbA (218 aa).

The signal sequence occupies residues 1–28; sequence MHRSPLAWLRLLLAAVLGAFLLGGPLHA. The Tyrosine-protein phosphatase domain occupies 44-188; sequence DPSINLYRMS…YVRGADVDGL (145 aa). The Proton donor/acceptor role is filled by Asp-105. Catalysis depends on Cys-132, which acts as the Phosphocysteine intermediate.

This sequence belongs to the protein-tyrosine phosphatase family. As to quaternary structure, monomer in solution.

It is found in the periplasm. It carries out the reaction O-phospho-L-tyrosyl-[protein] + H2O = L-tyrosyl-[protein] + phosphate. The enzyme catalyses O-phospho-L-threonyl-[protein] + H2O = L-threonyl-[protein] + phosphate. It catalyses the reaction O-phospho-L-seryl-[protein] + H2O = L-seryl-[protein] + phosphate. The phosphatase activity is completely inhibited by trisodium orthovanadate, a tyrosine phosphatase specific inhibitor. Functionally, phosphatase that regulates diverse phenotypes in P.aeruginosa via regulation of the concentration of cellular c-di-GMP. Acts by dephosphorylating the membrane-anchored diguanylate cyclase TpbB at tyrosine and serine/threonine sites, leading to inactivation of TpbB and reduced c-di-GMP production. The reduced cellular c-di-GMP concentration leads to reduced adhesin expression, reduced extracellular polysaccharide (EPS) production, pellicule production, cell aggregation and biofilm formation, and enhanced swimming and swarming. It affects colony morphology and controls rugose colony formation. TpbA also acts as a positive regulator of extracellular DNA (eDNA, a major component of the biofilm matrix) and cell lysis by reducing c-di-GMP concentrations. In vitro shows phosphatase activity toward p-nitrophenyl phosphate (pNPP), tyrosine phosphopeptides and a threonine phosphopeptide. Does not have phosphodiesterases (PDE) activity, and cannot degrade c-di-GMP. This Pseudomonas aeruginosa (strain UCBPP-PA14) protein is Dual specificity protein phosphatase TpbA.